The following is a 527-amino-acid chain: Formate--tetrahydrofolate ligase (527 aa).

Residue 53-60 (TSSGEGKT) coordinates ATP.

The protein belongs to the formate--tetrahydrofolate ligase family.

It carries out the reaction (6S)-5,6,7,8-tetrahydrofolate + formate + ATP = (6R)-10-formyltetrahydrofolate + ADP + phosphate. Its pathway is one-carbon metabolism; tetrahydrofolate interconversion. The polypeptide is Formate--tetrahydrofolate ligase (Acholeplasma laidlawii (strain PG-8A)).